We begin with the raw amino-acid sequence, 712 residues long: Polyribonucleotide nucleotidyltransferase (712 aa).

Residues Asp487 and Asp493 each coordinate Mg(2+). Residues 554–613 form the KH domain; that stretch reads PKIITMTINPDKIRDVIGPSGKQINKIIEETGVKIDIEQDGTVFISSINQEMNDKAKKII. The region spanning 623-691 is the S1 motif domain; that stretch reads GEIYEGKVKR…KQGRVNLSRK (69 aa).

This sequence belongs to the polyribonucleotide nucleotidyltransferase family. Requires Mg(2+) as cofactor.

It is found in the cytoplasm. It carries out the reaction RNA(n+1) + phosphate = RNA(n) + a ribonucleoside 5'-diphosphate. Functionally, involved in mRNA degradation. Catalyzes the phosphorolysis of single-stranded polyribonucleotides processively in the 3'- to 5'-direction. This is Polyribonucleotide nucleotidyltransferase from Bacillus anthracis.